The following is a 624-amino-acid chain: (-)-beta-phellandrene synthase 4, chloroplastic (624 aa).

Residues 1-48 (MAIVSSVPLASKSCLHKSLISSIHKLKPFCRTIPTLGMSRPGKSVMPS) constitute a chloroplast transit peptide. Residues 41 to 60 (PGKSVMPSMSMSSPVSDDGV) are disordered. Residues 44 to 56 (SVMPSMSMSSPVS) are compositionally biased toward low complexity. The Mg(2+) site is built by D375, D379, and D527. A DDXXD motif motif is present at residues 375-379 (DDMYD).

It belongs to the terpene synthase family. Tpsd subfamily. The cofactor is Mg(2+). Mn(2+) is required as a cofactor.

It localises to the plastid. The protein resides in the chloroplast. It catalyses the reaction (2E)-geranyl diphosphate = (-)-beta-phellandrene + diphosphate. Its pathway is terpene metabolism; oleoresin biosynthesis. In terms of biological role, terpene synthase (TPS) involved in the biosynthesis of monoterpene natural products included in conifer oleoresin secretions and volatile emissions; these compounds contribute to biotic and abiotic stress defense against herbivores and pathogens. Catalyzes the conversion of (2E)-geranyl diphosphate (GPP) to (-)-beta-phellandrene. The sequence is that of (-)-beta-phellandrene synthase 4, chloroplastic from Picea sitchensis (Sitka spruce).